The sequence spans 434 residues: Nicotinate phosphoribosyltransferase (434 aa).

The residue at position 242 (His-242) is a Phosphohistidine; by autocatalysis.

This sequence belongs to the NAPRTase family. In terms of processing, transiently phosphorylated on a His residue during the reaction cycle. Phosphorylation strongly increases the affinity for substrates and increases the rate of nicotinate D-ribonucleotide production. Dephosphorylation regenerates the low-affinity form of the enzyme, leading to product release.

The enzyme catalyses nicotinate + 5-phospho-alpha-D-ribose 1-diphosphate + ATP + H2O = nicotinate beta-D-ribonucleotide + ADP + phosphate + diphosphate. It participates in cofactor biosynthesis; NAD(+) biosynthesis; nicotinate D-ribonucleotide from nicotinate: step 1/1. In terms of biological role, catalyzes the synthesis of beta-nicotinate D-ribonucleotide from nicotinate and 5-phospho-D-ribose 1-phosphate at the expense of ATP. This is Nicotinate phosphoribosyltransferase from Bartonella quintana (strain Toulouse) (Rochalimaea quintana).